Consider the following 986-residue polypeptide: Ankyrin repeat, PH and SEC7 domain containing protein secG (986 aa).

Positions 1 to 28 (MGSTSNSTKNTGSTTTTTTTAAPATTAK) are enriched in low complexity. A disordered region spans residues 1 to 43 (MGSTSNSTKNTGSTTTTTTTAAPATTAKHSNSAPTRPSVHYYS). A compositionally biased stretch (polar residues) spans 29–43 (HSNSAPTRPSVHYYS). ANK repeat units follow at residues 34–63 (PTRP…TSPD), 68–97 (EKRT…NANI), 101–131 (AGNT…DVNT), 135–164 (KNGT…DPRA), 168–197 (NGET…KVNA), 201–230 (DCIT…KVDP), 234–263 (HGIS…NINC), 267–296 (EGVT…KINM), 300–329 (MGET…TMID), 334–363 (RQST…QINI), 367–396 (EGAT…PICI), 400–429 (QGAT…ELEV), 433–462 (QGGT…NVNA), 466–495 (HSST…RIDA), and 499–528 (AGKT…DLDQ). Positions 580–770 (QLAAEKQKLL…ENLYDKIVTN (191 aa)) constitute an SEC7 domain. In terms of domain architecture, PH spans 784-895 (HVEKKGWLTK…WVQSIKSNIH (112 aa)). The tract at residues 911 to 986 (IRGRGKVSTK…PVQQQTSALS (76 aa)) is disordered. Residues 920-929 (KPIQNRKQTI) show a composition bias toward polar residues. Low complexity-rich tracts occupy residues 936-953 (TTTT…SVGS) and 963-986 (SSGS…SALS).

The sequence is that of Ankyrin repeat, PH and SEC7 domain containing protein secG (secG) from Dictyostelium discoideum (Social amoeba).